We begin with the raw amino-acid sequence, 295 residues long: Ribosomal RNA small subunit methyltransferase A (295 aa).

S-adenosyl-L-methionine contacts are provided by N31, L33, G58, E79, D104, and N129.

It belongs to the class I-like SAM-binding methyltransferase superfamily. rRNA adenine N(6)-methyltransferase family. RsmA subfamily.

The protein resides in the cytoplasm. The enzyme catalyses adenosine(1518)/adenosine(1519) in 16S rRNA + 4 S-adenosyl-L-methionine = N(6)-dimethyladenosine(1518)/N(6)-dimethyladenosine(1519) in 16S rRNA + 4 S-adenosyl-L-homocysteine + 4 H(+). Specifically dimethylates two adjacent adenosines (A1518 and A1519) in the loop of a conserved hairpin near the 3'-end of 16S rRNA in the 30S particle. May play a critical role in biogenesis of 30S subunits. The protein is Ribosomal RNA small subunit methyltransferase A of Leuconostoc mesenteroides subsp. mesenteroides (strain ATCC 8293 / DSM 20343 / BCRC 11652 / CCM 1803 / JCM 6124 / NCDO 523 / NBRC 100496 / NCIMB 8023 / NCTC 12954 / NRRL B-1118 / 37Y).